The sequence spans 215 residues: MASMRTAAAAAMLACIAVVLASTAADGALLPWFGGGGARDEAVPELGLLAAADPFRILEHVPFGFDRDDVAMLSMARVDWRETGDAHEVVVDVPGMRKEDLRVEVEDNRVLRISGERRREETTEQKGGGDHWHREERSYGRFWRQLRLPDNADLDSIAASLDNGVLTVRFRKLAPDQIKGPRVVGIASAGGDDGGKKSIGGAGEGQNQQAKKVEL.

A signal peptide spans 1-27 (MASMRTAAAAAMLACIAVVLASTAADG). One can recognise a sHSP domain in the interval 69-189 (DVAMLSMARV…GPRVVGIASA (121 aa)). Positions 183 to 215 (VVGIASAGGDDGGKKSIGGAGEGQNQQAKKVEL) are disordered. Positions 205-215 (GQNQQAKKVEL) are enriched in polar residues.

Belongs to the small heat shock protein (HSP20) family. May form oligomeric structures.

It is found in the endoplasmic reticulum. The protein is 23.2 kDa heat shock protein (HSP23.2) of Oryza sativa subsp. japonica (Rice).